The primary structure comprises 304 residues: Ribosomal RNA small subunit methyltransferase H (304 aa).

S-adenosyl-L-methionine contacts are provided by residues 50 to 52 (GGH), Asp-69, Phe-97, Asp-113, and Gln-120.

The protein belongs to the methyltransferase superfamily. RsmH family.

Its subcellular location is the cytoplasm. It carries out the reaction cytidine(1402) in 16S rRNA + S-adenosyl-L-methionine = N(4)-methylcytidine(1402) in 16S rRNA + S-adenosyl-L-homocysteine + H(+). In terms of biological role, specifically methylates the N4 position of cytidine in position 1402 (C1402) of 16S rRNA. In Rippkaea orientalis (strain PCC 8801 / RF-1) (Cyanothece sp. (strain PCC 8801)), this protein is Ribosomal RNA small subunit methyltransferase H.